Here is a 668-residue protein sequence, read N- to C-terminus: Nuclear pore complex protein Nup75 (668 aa).

It belongs to the nucleoporin Nup85 family. In terms of assembly, component of the nuclear pore complex (NPC). Component of the NPC Nup107-160 subcomplex.

It is found in the nucleus. The protein localises to the nuclear pore complex. Its subcellular location is the nucleus membrane. Functionally, component of the nuclear pore complex (NPC) that seems to be required for NPC assembly and maintenance. Required for nuclear import of phosphorylated Mad via importin msk. Has no role in classical nuclear localization signal (cNLS)-dependent nuclear import via importin-beta. Facilitates the interaction between Nup93 and sec13 with msk. In Drosophila melanogaster (Fruit fly), this protein is Nuclear pore complex protein Nup75.